The chain runs to 301 residues: 33 kDa chaperonin (301 aa).

Intrachain disulfides connect cysteine 239-cysteine 241 and cysteine 272-cysteine 275.

It belongs to the HSP33 family. Under oxidizing conditions two disulfide bonds are formed involving the reactive cysteines. Under reducing conditions zinc is bound to the reactive cysteines and the protein is inactive.

It localises to the cytoplasm. In terms of biological role, redox regulated molecular chaperone. Protects both thermally unfolding and oxidatively damaged proteins from irreversible aggregation. Plays an important role in the bacterial defense system toward oxidative stress. The sequence is that of 33 kDa chaperonin from Nostoc punctiforme (strain ATCC 29133 / PCC 73102).